Consider the following 52-residue polypeptide: Superoxide dismutase [Cu-Zn] 2 (52 aa).

His-44 contacts Cu cation.

It belongs to the Cu-Zn superoxide dismutase family. Homodimer. Cu cation serves as cofactor. The cofactor is Zn(2+).

The protein resides in the cytoplasm. The enzyme catalyses 2 superoxide + 2 H(+) = H2O2 + O2. Its function is as follows. Destroys radicals which are normally produced within the cells and which are toxic to biological systems. The chain is Superoxide dismutase [Cu-Zn] 2 from Debaryomyces hansenii (Yeast).